Here is a 117-residue protein sequence, read N- to C-terminus: Large ribosomal subunit protein bL20c (117 aa).

Belongs to the bacterial ribosomal protein bL20 family.

It localises to the plastid. The protein resides in the chloroplast. Functionally, binds directly to 23S ribosomal RNA and is necessary for the in vitro assembly process of the 50S ribosomal subunit. It is not involved in the protein synthesizing functions of that subunit. The sequence is that of Large ribosomal subunit protein bL20c from Populus alba (White poplar).